We begin with the raw amino-acid sequence, 842 residues long: Xyloglucanase Xgh74A (842 aa).

The N-terminal stretch at 1-32 (MVKKFTSKIKAAVFAAVVAATAIFGPAISSQA) is a signal peptide. D70 (nucleophile) is an active-site residue. 4 BNR repeats span residues 134–144 (RSTDRGETWEK), 185–196 (WRSTDYGVTWSK), 252–262 (YRSTDGGVTWK), and 358–368 (FRSTDGGATWK). D480 (proton donor) is an active-site residue. BNR repeat units follow at residues 533–541 (FSYDGGRNW), 577–586 (VTTDNGNSWK), 616–626 (YISTDGGLTFT), 660–671 (WRSTDGGYTFEK), and 708–718 (FRSDDAGKTWV). The 71-residue stretch at 771 to 841 (DKGLVGDLNG…LLQAIPELPK (71 aa)) folds into the Dockerin domain.

This sequence belongs to the glycosyl hydrolase 74 family.

Its function is as follows. Hydrolyzes the glucosidic bonds of unbranched Glc residues in tamarind seed xyloglucan, producing XXXG, XLXG, XXLG and XLLG. Has low activity on carboxymethylcellulose, lichenan,hydroxyethylcellulose and glucuronoxylan, and no activity on xylan, polygalaturonic acid, wheat arabinoxylan, rhamnogalacturan, curdlan, laminarin, galactomannan, galactan, arabinan and pachyman or amorphous cellulose. The protein is Xyloglucanase Xgh74A of Acetivibrio thermocellus (Hungateiclostridium thermocellum).